Here is a 192-residue protein sequence, read N- to C-terminus: Potassium channel HX13_20290 (192 aa).

Residues 1–24 form a helical membrane-spanning segment; the sequence is MTKGRLEAFSDGVLAIIITIMVLE. The short motif at 5-11 is the RxxxFSD motif element; it reads RLEAFSD. Position 25 (Leu25) is a topological domain, cytoplasmic. Residues 26 to 29 form a short helix H1 region; the sequence is KVPE. Topologically, residues 26 to 39 are extracellular; that stretch reads KVPEGSSWASLQPI. Positions 31 to 37 are short helix H2; it reads SSWASLQ. A helical transmembrane segment spans residues 40-65; the sequence is LPRFLAYIFSFIYVGIYWNNHHHLFQ. The Cytoplasmic segment spans residues 66-71; that stretch reads TVKKVN. A helical membrane pass occupies residues 72–93; the sequence is GSILWANLHLLFWLSLMPIATE. Topologically, residues 94–101 are extracellular; sequence WIGTSHFA. A helical transmembrane segment spans residues 102–126; that stretch reads QNPVATYGIGLIMSAIAYTILENVI. The Cytoplasmic portion of the chain corresponds to 127-133; it reads IRCEGEN. A helical transmembrane segment spans residues 134–162; that stretch reads SKLKEAIHSKFKEYISIIFYVLGIATSFF. Topologically, residues 163–164 are extracellular; that stretch reads YP. A helical membrane pass occupies residues 165 to 180; the sequence is YIAIGFYYLVALIWLI. The Cytoplasmic segment spans residues 181-192; the sequence is PDKRIEKSLKEN.

This sequence belongs to the TMEM175 family. In terms of assembly, homotetramer.

It is found in the membrane. The catalysed reaction is K(+)(in) = K(+)(out). Functionally, potassium channel. This chain is Potassium channel HX13_20290, found in Chryseobacterium sp. (strain P1-3).